A 414-amino-acid chain; its full sequence is 2,3-diketo-5-methylthiopentyl-1-phosphate enolase (414 aa).

K99 acts as the Proton acceptor in catalysis. Residues K148, 174 to 177, H265, G338, and 360 to 361 contribute to the substrate site; these read KDDE and GG. Mg(2+) contacts are provided by K174, D176, and E177. K174 carries the N6-carboxylysine modification.

Belongs to the RuBisCO large chain family. Type IV subfamily. Homodimer. It depends on Mg(2+) as a cofactor.

The enzyme catalyses 5-methylsulfanyl-2,3-dioxopentyl phosphate = 2-hydroxy-5-methylsulfanyl-3-oxopent-1-enyl phosphate. It functions in the pathway amino-acid biosynthesis; L-methionine biosynthesis via salvage pathway; L-methionine from S-methyl-5-thio-alpha-D-ribose 1-phosphate: step 3/6. Functionally, catalyzes the enolization of 2,3-diketo-5-methylthiopentyl-1-phosphate (DK-MTP-1-P) into 2-hydroxy-3-keto-5-methylthiopentenyl-1-phosphate (HK-MTPenyl-1-P). The chain is 2,3-diketo-5-methylthiopentyl-1-phosphate enolase from Bacillus cereus (strain ATCC 14579 / DSM 31 / CCUG 7414 / JCM 2152 / NBRC 15305 / NCIMB 9373 / NCTC 2599 / NRRL B-3711).